The chain runs to 152 residues: Nucleoside diphosphate kinase (152 aa).

6 residues coordinate ATP: Lys-12, Phe-60, Arg-88, Thr-94, Arg-105, and Asn-115. Residue His-118 is the Pros-phosphohistidine intermediate of the active site.

This sequence belongs to the NDK family. As to quaternary structure, homotrimer. It depends on Mg(2+) as a cofactor.

It carries out the reaction a 2'-deoxyribonucleoside 5'-diphosphate + ATP = a 2'-deoxyribonucleoside 5'-triphosphate + ADP. The catalysed reaction is a ribonucleoside 5'-diphosphate + ATP = a ribonucleoside 5'-triphosphate + ADP. Functionally, major role in the synthesis of nucleoside triphosphates other than ATP. The ATP gamma phosphate is transferred to the NDP beta phosphate via a ping-pong mechanism, using a phosphorylated active-site intermediate. The chain is Nucleoside diphosphate kinase (ndk-1) from Neurospora crassa (strain ATCC 24698 / 74-OR23-1A / CBS 708.71 / DSM 1257 / FGSC 987).